Consider the following 183-residue polypeptide: Caltractin ICL1c (183 aa).

Residues 1–30 form a disordered region; the sequence is MARRGQQPPPQQQQAPPTQKNQAGKFNPAE. 4 EF-hand domains span residues 39–74, 75–110, 112–147, and 148–183; these read EEVLEIKEAFDLFDTDGTQSIDPKELKAAMTSLGFE, AKNQTIYQMISDLDTDGSGQIDFAEFLKLMTARISE, DSKADIQKVFNLFDSERAGVITLKDLRKVAKELGET, and MDDSELQEMIDRADSDGDAQVTFEDFYNIMTKKTFA. Ca(2+) is bound by residues Asp-52, Asp-54, Thr-56, Ser-58, Glu-63, Asp-88, Asp-90, Ser-92, Gln-94, and Glu-99.

It belongs to the centrin family. As to quaternary structure, monomer.

It is found in the cytoplasm. It localises to the cytoskeleton. Plays a fundamental role in microtubule organizing center structure and function. Component of the infraciliary lattice (ICL) and the ciliary basal bodies. The polypeptide is Caltractin ICL1c (Icl1c) (Paramecium tetraurelia).